Consider the following 481-residue polypeptide: tRNA sulfurtransferase (481 aa).

A THUMP domain is found at 54 to 156 (ADGDGPLRHI…GKDVFFYHEI (103 aa)). ATP contacts are provided by residues 174–175 (LV), K256, G278, and Q287. Cysteines 334 and 433 form a disulfide. One can recognise a Rhodanese domain in the interval 388–463 (IPKDAVIIDL…YYSTFSDLKK (76 aa)). Residue C433 is the Cysteine persulfide intermediate of the active site.

It belongs to the ThiI family.

It is found in the cytoplasm. The catalysed reaction is [ThiI sulfur-carrier protein]-S-sulfanyl-L-cysteine + a uridine in tRNA + 2 reduced [2Fe-2S]-[ferredoxin] + ATP + H(+) = [ThiI sulfur-carrier protein]-L-cysteine + a 4-thiouridine in tRNA + 2 oxidized [2Fe-2S]-[ferredoxin] + AMP + diphosphate. The enzyme catalyses [ThiS sulfur-carrier protein]-C-terminal Gly-Gly-AMP + S-sulfanyl-L-cysteinyl-[cysteine desulfurase] + AH2 = [ThiS sulfur-carrier protein]-C-terminal-Gly-aminoethanethioate + L-cysteinyl-[cysteine desulfurase] + A + AMP + 2 H(+). It participates in cofactor biosynthesis; thiamine diphosphate biosynthesis. In terms of biological role, catalyzes the ATP-dependent transfer of a sulfur to tRNA to produce 4-thiouridine in position 8 of tRNAs, which functions as a near-UV photosensor. Also catalyzes the transfer of sulfur to the sulfur carrier protein ThiS, forming ThiS-thiocarboxylate. This is a step in the synthesis of thiazole, in the thiamine biosynthesis pathway. The sulfur is donated as persulfide by IscS. The chain is tRNA sulfurtransferase from Thermoplasma acidophilum (strain ATCC 25905 / DSM 1728 / JCM 9062 / NBRC 15155 / AMRC-C165).